Consider the following 213-residue polypeptide: Peptidyl-prolyl cis-trans isomerase B (213 aa).

The N-terminal stretch at 1–23 (MAVLRVLCGLLLVSILFLGFVLS) is a signal peptide. Residues 35-197 (FFDIEVDEQP…KSVKIANCGH (163 aa)) form the PPIase cyclophilin-type domain. The short motif at 210–213 (DAAE) is the Prevents secretion from ER element.

It belongs to the cyclophilin-type PPIase family. PPIase B subfamily.

It is found in the endoplasmic reticulum lumen. The enzyme catalyses [protein]-peptidylproline (omega=180) = [protein]-peptidylproline (omega=0). Inhibited by cyclosporin A (CsA). PPIases accelerate the folding of proteins. It catalyzes the cis-trans isomerization of proline imidic peptide bonds in oligopeptides. This chain is Peptidyl-prolyl cis-trans isomerase B, found in Schistosoma japonicum (Blood fluke).